A 332-amino-acid chain; its full sequence is Anthranilate phosphoribosyltransferase (332 aa).

Residues G79, G82 to D83, T87, N89 to T92, K107 to S115, and S119 each bind 5-phospho-alpha-D-ribose 1-diphosphate. G79 serves as a coordination point for anthranilate. Position 91 (S91) interacts with Mg(2+). N110 lines the anthranilate pocket. R165 lines the anthranilate pocket. Mg(2+) contacts are provided by D223 and E224.

Belongs to the anthranilate phosphoribosyltransferase family. Homodimer. Mg(2+) is required as a cofactor.

The catalysed reaction is N-(5-phospho-beta-D-ribosyl)anthranilate + diphosphate = 5-phospho-alpha-D-ribose 1-diphosphate + anthranilate. It participates in amino-acid biosynthesis; L-tryptophan biosynthesis; L-tryptophan from chorismate: step 2/5. Catalyzes the transfer of the phosphoribosyl group of 5-phosphorylribose-1-pyrophosphate (PRPP) to anthranilate to yield N-(5'-phosphoribosyl)-anthranilate (PRA). The polypeptide is Anthranilate phosphoribosyltransferase (Vibrio cholerae serotype O1 (strain ATCC 39541 / Classical Ogawa 395 / O395)).